Here is a 408-residue protein sequence, read N- to C-terminus: PCI domain-containing protein 2 (408 aa).

Alanine 2 is modified (N-acetylalanine). Phosphoserine is present on serine 45. Residues 210–400 (VTYRYYVGRK…QKLVVSKQNP (191 aa)) form the PCI domain.

This sequence belongs to the CSN12 family. In terms of assembly, component of the nuclear pore complex (NPC)-associated TREX-2 complex (transcription and export complex 2), composed of at least GANP, 2 copies of ENY2, PCID2, SEM1/DSS1, and either centrin CETN2 or centrin CETN3. The TREX-2 complex also associates with ALYREF/ALY and with the nucleoporin NUP153. Interacts with BRCA2. Interacts with SRCAP chromatin remodeling complex component ZNHIT1; the interaction results in inhibition of SRCAP complex activity, preventing the deposition of histone variant H2AZ1/H2A.Z to lymphoid fate regulator genes and restricting lymphoid lineage commitment.

It localises to the cytoplasm. Its subcellular location is the nucleus. It is found in the nuclear pore complex. Its function is as follows. Required for B-cell survival through the regulation of the expression of cell-cycle checkpoint MAD2L1 protein during B cell differentiation. As a component of the TREX-2 complex, involved in the export of mRNAs to the cytoplasm through the nuclear pores. Binds and stabilizes BRCA2 and is thus involved in the control of R-loop-associated DNA damage and transcription-associated genomic instability. Blocks the activity of the SRCAP chromatin remodeling complex by interacting with SRCAP complex member ZNHIT1 and inhibiting its interaction with the complex. This prevents the deposition of histone variant H2AZ1/H2A.Z at the nucleosomes of key lymphoid fate regulator genes which suppresses their expression and restricts lymphoid lineage commitment. In Bos taurus (Bovine), this protein is PCI domain-containing protein 2 (PCID2).